A 151-amino-acid polypeptide reads, in one-letter code: uncharacterized protein (151 aa).

To equivalent protein in phage 82.

This is an uncharacterized protein from Escherichia coli (strain K12).